We begin with the raw amino-acid sequence, 236 residues long: 2,3,4,5-tetrahydropyridine-2,6-dicarboxylate N-acetyltransferase (236 aa).

The protein belongs to the transferase hexapeptide repeat family. DapH subfamily.

The catalysed reaction is (S)-2,3,4,5-tetrahydrodipicolinate + acetyl-CoA + H2O = L-2-acetamido-6-oxoheptanedioate + CoA. The protein operates within amino-acid biosynthesis; L-lysine biosynthesis via DAP pathway; LL-2,6-diaminopimelate from (S)-tetrahydrodipicolinate (acetylase route): step 1/3. Catalyzes the transfer of an acetyl group from acetyl-CoA to tetrahydrodipicolinate. In Clostridium botulinum (strain Langeland / NCTC 10281 / Type F), this protein is 2,3,4,5-tetrahydropyridine-2,6-dicarboxylate N-acetyltransferase.